Consider the following 343-residue polypeptide: Uroporphyrinogen decarboxylase (343 aa).

Residues Arg23–Arg27, Asp73, Tyr151, Ser206, and His322 contribute to the substrate site.

It belongs to the uroporphyrinogen decarboxylase family. As to quaternary structure, homodimer.

It is found in the cytoplasm. The enzyme catalyses uroporphyrinogen III + 4 H(+) = coproporphyrinogen III + 4 CO2. The protein operates within porphyrin-containing compound metabolism; protoporphyrin-IX biosynthesis; coproporphyrinogen-III from 5-aminolevulinate: step 4/4. Functionally, catalyzes the decarboxylation of four acetate groups of uroporphyrinogen-III to yield coproporphyrinogen-III. The polypeptide is Uroporphyrinogen decarboxylase (Granulibacter bethesdensis (strain ATCC BAA-1260 / CGDNIH1)).